We begin with the raw amino-acid sequence, 100 residues long: Large ribosomal subunit protein bL21 (100 aa).

This sequence belongs to the bacterial ribosomal protein bL21 family. As to quaternary structure, part of the 50S ribosomal subunit. Contacts protein L20.

In terms of biological role, this protein binds to 23S rRNA in the presence of protein L20. This chain is Large ribosomal subunit protein bL21, found in Mycoplasma capricolum subsp. capricolum (strain California kid / ATCC 27343 / NCTC 10154).